We begin with the raw amino-acid sequence, 376 residues long: Putative type I restriction enzyme MpnIIP endonuclease subunit N-terminal part (376 aa).

Functionally, the N-terminal section of a putative type I restriction enzyme that if reconstituted might recognize 5'-GAN(7)TAY-3' and cleave a random distance away. Subunit R is required for both nuclease and ATPase activities, but not for modification. The protein is Putative type I restriction enzyme MpnIIP endonuclease subunit N-terminal part of Mycoplasma pneumoniae (strain ATCC 29342 / M129 / Subtype 1) (Mycoplasmoides pneumoniae).